The chain runs to 466 residues: Hydroxyproline dehydrogenase (466 aa).

The protein belongs to the proline oxidase family. The cofactor is FAD.

It catalyses the reaction trans-4-hydroxy-L-proline + a quinone = (3R,5S)-1-pyrroline-3-hydroxy-5-carboxylate + a quinol + H(+). The catalysed reaction is L-proline + a quinone = (S)-1-pyrroline-5-carboxylate + a quinol + H(+). The protein operates within amino-acid degradation; L-proline degradation into L-glutamate; L-glutamate from L-proline: step 1/2. In terms of biological role, dehydrogenase that converts trans-4-L-hydroxyproline to delta-1-pyrroline-3-hydroxy-5-carboxylate (Hyp) using a quinone as the terminal electron acceptor. Can also use proline as a substrate but with a very much lower efficiency. Does not react with other diastereomers of Hyp: trans-4-D-hydroxyproline and cis-4-L-hydroxyproline. In Xenopus laevis (African clawed frog), this protein is Hydroxyproline dehydrogenase (prodh2).